The chain runs to 309 residues: Glutaminase 2 (309 aa).

Positions 65, 117, 162, 169, 193, 245, and 263 each coordinate substrate.

Belongs to the glutaminase family. As to quaternary structure, homotetramer.

It carries out the reaction L-glutamine + H2O = L-glutamate + NH4(+). The sequence is that of Glutaminase 2 from Bacillus subtilis (strain 168).